The chain runs to 294 residues: UDP-N-acetylenolpyruvoylglucosamine reductase (294 aa).

Residues 26–189 (VGGQADVLFK…IEAEFKGVSS (164 aa)) enclose the FAD-binding PCMH-type domain. The active site involves Arg169. Cys218 acts as the Proton donor in catalysis. Glu288 is a catalytic residue.

Belongs to the MurB family. Requires FAD as cofactor.

The protein localises to the cytoplasm. It catalyses the reaction UDP-N-acetyl-alpha-D-muramate + NADP(+) = UDP-N-acetyl-3-O-(1-carboxyvinyl)-alpha-D-glucosamine + NADPH + H(+). It participates in cell wall biogenesis; peptidoglycan biosynthesis. Functionally, cell wall formation. In Wolbachia pipientis subsp. Culex pipiens (strain wPip), this protein is UDP-N-acetylenolpyruvoylglucosamine reductase.